The primary structure comprises 76 residues: Omega-scoloptoxin(13)-Ssm2b (76 aa).

Positions 1-22 are cleaved as a signal peptide; it reads MAYIYALIFAIVVCMNTDVIQA.

The protein belongs to the scoloptoxin-13 family. Post-translationally, contains 3 disulfide bonds. In terms of tissue distribution, expressed by the venom gland.

The protein resides in the secreted. Functionally, inhibits voltage-gated calcium channel (Cav) currents. This is Omega-scoloptoxin(13)-Ssm2b from Scolopendra mutilans (Chinese red-headed centipede).